We begin with the raw amino-acid sequence, 216 residues long: Octanoyltransferase (216 aa).

The BPL/LPL catalytic domain maps to 24-212; that stretch reads KFRKECILFL…NLCSFLEPIN (189 aa). Substrate-binding positions include 69–76, 140–142, and 153–155; these read RGGDFTAH, SIG, and GIA. Residue cysteine 171 is the Acyl-thioester intermediate of the active site.

Belongs to the LipB family.

The protein resides in the cytoplasm. It carries out the reaction octanoyl-[ACP] + L-lysyl-[protein] = N(6)-octanoyl-L-lysyl-[protein] + holo-[ACP] + H(+). It functions in the pathway protein modification; protein lipoylation via endogenous pathway; protein N(6)-(lipoyl)lysine from octanoyl-[acyl-carrier-protein]: step 1/2. Its function is as follows. Catalyzes the transfer of endogenously produced octanoic acid from octanoyl-acyl-carrier-protein onto the lipoyl domains of lipoate-dependent enzymes. Lipoyl-ACP can also act as a substrate although octanoyl-ACP is likely to be the physiological substrate. The polypeptide is Octanoyltransferase (Leptospira interrogans serogroup Icterohaemorrhagiae serovar copenhageni (strain Fiocruz L1-130)).